The sequence spans 394 residues: Ribulose bisphosphate carboxylase large chain (394 aa).

At Lys-5 the chain carries N6,N6,N6-trimethyllysine. Substrate contacts are provided by Asn-114 and Thr-164. Lys-166 (proton acceptor) is an active-site residue. Residue Lys-168 coordinates substrate. Mg(2+)-binding residues include Lys-192, Asp-194, and Glu-195. Residue Lys-192 is modified to N6-carboxylysine. Residue His-285 is the Proton acceptor of the active site. Residues Arg-286, His-318, and Ser-370 each coordinate substrate.

The protein belongs to the RuBisCO large chain family. Type I subfamily. In terms of assembly, heterohexadecamer of 8 large chains and 8 small chains. It depends on Mg(2+) as a cofactor.

The protein resides in the plastid. Its subcellular location is the chloroplast. It catalyses the reaction 2 (2R)-3-phosphoglycerate + 2 H(+) = D-ribulose 1,5-bisphosphate + CO2 + H2O. The catalysed reaction is D-ribulose 1,5-bisphosphate + O2 = 2-phosphoglycolate + (2R)-3-phosphoglycerate + 2 H(+). Functionally, ruBisCO catalyzes two reactions: the carboxylation of D-ribulose 1,5-bisphosphate, the primary event in carbon dioxide fixation, as well as the oxidative fragmentation of the pentose substrate in the photorespiration process. Both reactions occur simultaneously and in competition at the same active site. The protein is Ribulose bisphosphate carboxylase large chain (rbcL) of Nymphaea odorata (White water lily).